The chain runs to 361 residues: Cysteine-rich with EGF-like domain protein 2-A (361 aa).

Positions methionine 1 to alanine 24 are cleaved as a signal peptide. The 43-residue stretch at aspartate 134–leucine 176 folds into the EGF-like 1 domain. Disulfide bonds link cysteine 138-cysteine 152, cysteine 146-cysteine 164, and cysteine 166-cysteine 175. An N-linked (GlcNAc...) asparagine glycan is attached at asparagine 188. FU repeat units lie at residues tyrosine 191–proline 238 and serine 251–valine 298. An EGF-like 2; calcium-binding domain is found at aspartate 288–valine 329. Disulfide bonds link cysteine 292-cysteine 306, cysteine 299-cysteine 315, and cysteine 317-cysteine 328. Asparagine 303 carries N-linked (GlcNAc...) asparagine glycosylation. Residues aspartate 341 to leucine 361 form a disordered region. Residues threonine 346 to leucine 361 are compositionally biased toward polar residues. The N-linked (GlcNAc...) asparagine glycan is linked to asparagine 352.

Belongs to the CRELD family.

It is found in the secreted. The protein resides in the endoplasmic reticulum. In terms of biological role, possible role in neuronal acetylcholine receptor transport. This chain is Cysteine-rich with EGF-like domain protein 2-A (creld2-a), found in Xenopus laevis (African clawed frog).